An 815-amino-acid polypeptide reads, in one-letter code: (-)-kolavenyl diphosphate synthase TPS10, chloroplastic (815 aa).

Residues 1–50 (MFMSSSSSSHARRPQLSSFSYLHPPLPFPGLSFSSTRDKRVNFDSTRIIS) constitute a chloroplast transit peptide. A substrate-binding site is contributed by K247. Mg(2+)-binding residues include D379 and D381. The DXDD motif signature appears at 379–382 (DIDD). Position 465 (K465) interacts with substrate.

It belongs to the terpene synthase family. Tpsc subfamily. Mg(2+) serves as cofactor.

The protein localises to the plastid. It localises to the chloroplast. The catalysed reaction is (2E,6E,10E)-geranylgeranyl diphosphate = (-)-kolavenyl diphosphate. With respect to regulation, inhibited by high concentrations of magnesium. Diterpene synthase that catalyzes the formation of (-)-kolavenyl diphosphate from geranylgeranyl diphosphate (GGPP). This is (-)-kolavenyl diphosphate synthase TPS10, chloroplastic from Tripterygium wilfordii (Thunder God vine).